A 141-amino-acid chain; its full sequence is 3-hydroxyacyl-[acyl-carrier-protein] dehydratase FabZ (141 aa).

The active site involves H48.

Belongs to the thioester dehydratase family. FabZ subfamily.

The protein localises to the cytoplasm. The enzyme catalyses a (3R)-hydroxyacyl-[ACP] = a (2E)-enoyl-[ACP] + H2O. In terms of biological role, involved in unsaturated fatty acids biosynthesis. Catalyzes the dehydration of short chain beta-hydroxyacyl-ACPs and long chain saturated and unsaturated beta-hydroxyacyl-ACPs. In Bacillus subtilis (strain 168), this protein is 3-hydroxyacyl-[acyl-carrier-protein] dehydratase FabZ.